The following is a 419-amino-acid chain: Serine hydroxymethyltransferase (419 aa).

(6S)-5,6,7,8-tetrahydrofolate is bound by residues leucine 121 and 125 to 127 (GHL). Lysine 230 carries the N6-(pyridoxal phosphate)lysine modification. (6S)-5,6,7,8-tetrahydrofolate is bound by residues glutamate 246 and 355 to 357 (SPF).

Belongs to the SHMT family. Homodimer. Pyridoxal 5'-phosphate is required as a cofactor.

It localises to the cytoplasm. It catalyses the reaction (6R)-5,10-methylene-5,6,7,8-tetrahydrofolate + glycine + H2O = (6S)-5,6,7,8-tetrahydrofolate + L-serine. Its pathway is one-carbon metabolism; tetrahydrofolate interconversion. The protein operates within amino-acid biosynthesis; glycine biosynthesis; glycine from L-serine: step 1/1. Its function is as follows. Catalyzes the reversible interconversion of serine and glycine with tetrahydrofolate (THF) serving as the one-carbon carrier. This reaction serves as the major source of one-carbon groups required for the biosynthesis of purines, thymidylate, methionine, and other important biomolecules. Also exhibits THF-independent aldolase activity toward beta-hydroxyamino acids, producing glycine and aldehydes, via a retro-aldol mechanism. This chain is Serine hydroxymethyltransferase, found in Streptococcus suis (strain 98HAH33).